Reading from the N-terminus, the 68-residue chain is Gallinacin-10 (68 aa).

The signal sequence occupies residues 1-19; the sequence is MKILCLLFAVLLFLFQAAP. Positions 20-25 are excised as a propeptide; that stretch reads GSADPL. Intrachain disulfides connect Cys32-Cys61, Cys39-Cys54, and Cys44-Cys62.

This sequence belongs to the beta-defensin family. As to expression, strong expression in the testis, liver, gall bladder and kidney. Also expressed in the ovary and male and female reproductive tracts. Expressed in the ovarian stroma and the theca and granulosa layers of the ovarian follicle.

It is found in the secreted. The protein resides in the cytoplasmic granule. Functionally, has bactericidal activity. The sequence is that of Gallinacin-10 (GAL10) from Gallus gallus (Chicken).